The following is a 65-amino-acid chain: Large ribosomal subunit protein bL35 (65 aa).

The protein belongs to the bacterial ribosomal protein bL35 family.

The polypeptide is Large ribosomal subunit protein bL35 (Thermotoga maritima (strain ATCC 43589 / DSM 3109 / JCM 10099 / NBRC 100826 / MSB8)).